The chain runs to 156 residues: DNA gyrase inhibitor (156 aa).

Belongs to the DNA gyrase inhibitor family. As to quaternary structure, interacts with DNA gyrase.

The protein resides in the cytoplasm. Functionally, inhibits the supercoiling activity of DNA gyrase. Acts by inhibiting DNA gyrase at an early step, prior to (or at the step of) binding of DNA by the gyrase. It protects cells against toxins that target DNA gyrase, by inhibiting activity of these toxins and reducing the formation of lethal double-strand breaks in the cell. The polypeptide is DNA gyrase inhibitor (Serratia proteamaculans (strain 568)).